A 311-amino-acid chain; its full sequence is Metal-staphylopine import system permease protein CntB (311 aa).

A run of 6 helical transmembrane segments spans residues 9 to 29, 105 to 125, 139 to 159, 173 to 193, 237 to 257, and 274 to 294; these read IALMFPLVIVVSFMTFLLTYI, LTIISSVMVMITSIILGVVSA, VAFFLTALPSYWIASILIIYV, GPESYILPVIVITIAYAGIYF, IFCMSIPMIMGGLVVIEYIFA, and FPVIQAYVLIVAVLFIVFNTL. Residues 99-295 enclose the ABC transmembrane type-1 domain; sequence FMNTLKLTII…VLFIVFNTLA (197 aa).

This sequence belongs to the binding-protein-dependent transport system permease family. The complex is composed of two ATP-binding proteins (CntD and CntF), two transmembrane proteins (CntB and CntC) and a solute-binding protein (CntA).

The protein localises to the cell membrane. In terms of biological role, part of the ABC transporter complex CntABCDF (Opp1) involved in the uptake of metal in complex with the metallophore staphylopine (StP). May be involved in the import of a large array of divalent metals ions such as nickel, cobalt, zinc, copper and iron. Probably responsible for the translocation of the substrate across the membrane. The polypeptide is Metal-staphylopine import system permease protein CntB (Staphylococcus aureus (strain Mu50 / ATCC 700699)).